Here is a 376-residue protein sequence, read N- to C-terminus: Carbamoyl phosphate synthase small chain (376 aa).

Residues 1–183 are CPSase; that stretch reads MSKAVLVLED…PDGPPGVSRF (183 aa). Ser46, Gly232, and Gly234 together coordinate L-glutamine. The Glutamine amidotransferase type-1 domain maps to 184 to 376; the sequence is TVAALDLGIK…FVELMAGEGR (193 aa). Catalysis depends on Cys260, which acts as the Nucleophile. 5 residues coordinate L-glutamine: Phe261, Gln264, Asn302, Gly304, and Phe305. Residues His350 and Glu352 contribute to the active site.

It belongs to the CarA family. In terms of assembly, composed of two chains; the small (or glutamine) chain promotes the hydrolysis of glutamine to ammonia, which is used by the large (or ammonia) chain to synthesize carbamoyl phosphate. Tetramer of heterodimers (alpha,beta)4.

The catalysed reaction is hydrogencarbonate + L-glutamine + 2 ATP + H2O = carbamoyl phosphate + L-glutamate + 2 ADP + phosphate + 2 H(+). It catalyses the reaction L-glutamine + H2O = L-glutamate + NH4(+). It functions in the pathway amino-acid biosynthesis; L-arginine biosynthesis; carbamoyl phosphate from bicarbonate: step 1/1. Its pathway is pyrimidine metabolism; UMP biosynthesis via de novo pathway; (S)-dihydroorotate from bicarbonate: step 1/3. Functionally, small subunit of the glutamine-dependent carbamoyl phosphate synthetase (CPSase). CPSase catalyzes the formation of carbamoyl phosphate from the ammonia moiety of glutamine, carbonate, and phosphate donated by ATP, constituting the first step of 2 biosynthetic pathways, one leading to arginine and/or urea and the other to pyrimidine nucleotides. The small subunit (glutamine amidotransferase) binds and cleaves glutamine to supply the large subunit with the substrate ammonia. This is Carbamoyl phosphate synthase small chain from Mycobacterium bovis (strain ATCC BAA-935 / AF2122/97).